A 229-amino-acid chain; its full sequence is Ribonuclease 3 (229 aa).

Positions 7 to 132 (ISAFCDRIGH…VIAAVYRDAG (126 aa)) constitute an RNase III domain. Glutamate 45 is a binding site for Mg(2+). The active site involves aspartate 49. Mg(2+)-binding residues include aspartate 118 and glutamate 121. Glutamate 121 is an active-site residue. The region spanning 157–226 (DPKTALQEWA…AKALLAQVES (70 aa)) is the DRBM domain.

It belongs to the ribonuclease III family. In terms of assembly, homodimer. The cofactor is Mg(2+).

It is found in the cytoplasm. It carries out the reaction Endonucleolytic cleavage to 5'-phosphomonoester.. Functionally, digests double-stranded RNA. Involved in the processing of primary rRNA transcript to yield the immediate precursors to the large and small rRNAs (23S and 16S). Processes some mRNAs, and tRNAs when they are encoded in the rRNA operon. Processes pre-crRNA and tracrRNA of type II CRISPR loci if present in the organism. The chain is Ribonuclease 3 from Dinoroseobacter shibae (strain DSM 16493 / NCIMB 14021 / DFL 12).